A 141-amino-acid chain; its full sequence is Hemoglobin subunit alpha-1/2 (141 aa).

The region spanning 1–141 is the Globin domain; it reads VLSPADKTNV…VSTVLTSKYR (141 aa). Position 3 is a phosphoserine (Ser3). Residue Lys7 is modified to N6-succinyllysine. Thr8 carries the phosphothreonine modification. Lys11 carries the post-translational modification N6-succinyllysine. N6-acetyllysine; alternate is present on Lys16. Residue Lys16 is modified to N6-succinyllysine; alternate. Tyr24 is modified (phosphotyrosine). Residue Ser35 is modified to Phosphoserine. Lys40 is subject to N6-succinyllysine. Residue Ser49 is modified to Phosphoserine. Residue His58 coordinates O2. Heme b is bound at residue His87. The residue at position 102 (Ser102) is a Phosphoserine. Thr108 bears the Phosphothreonine mark. Ser124 is subject to Phosphoserine. 2 positions are modified to phosphothreonine: Thr134 and Thr137. Ser138 carries the phosphoserine modification.

The protein belongs to the globin family. Heterotetramer of two alpha chains and two beta chains. As to expression, red blood cells.

Its function is as follows. Involved in oxygen transport from the lung to the various peripheral tissues. This chain is Hemoglobin subunit alpha-1/2, found in Mustela lutreola (European mink).